Consider the following 346-residue polypeptide: MIKIAIIGASGYTGVELSRLLCNHPQVEITAVTSRQYAGVALSEVFPNLRGRTSLICENLTIEELCLRADLFFAAVPHKTAMNIVPQLLAAGKKVIDLSADFRLNSAAVYEEWYQEHSAKEFLSQAVYGLPELYREQIAKTQLLANPGCYPTSIILGMAPLLRAGIIKPQSIIADSKSGTTGAGRGAKVGSLFCEVNDGFKAYGVGRKHRHTPEIEQELGKLANTDFNITFTPHLLPISRGILSTIYADLNCEIEADEVQALYEEMYKDEPFVRVLPLGSAPATQYVRGSNYCDIGFAIDQTTGRIIVMSAIDNVVKGAAGQAVQNMNIMCGFAEQEGLEIVPLFP.

Cys149 is a catalytic residue.

The protein belongs to the NAGSA dehydrogenase family. Type 1 subfamily.

It localises to the cytoplasm. The catalysed reaction is N-acetyl-L-glutamate 5-semialdehyde + phosphate + NADP(+) = N-acetyl-L-glutamyl 5-phosphate + NADPH + H(+). It participates in amino-acid biosynthesis; L-arginine biosynthesis; N(2)-acetyl-L-ornithine from L-glutamate: step 3/4. Catalyzes the NADPH-dependent reduction of N-acetyl-5-glutamyl phosphate to yield N-acetyl-L-glutamate 5-semialdehyde. This chain is N-acetyl-gamma-glutamyl-phosphate reductase, found in Desulfotalea psychrophila (strain LSv54 / DSM 12343).